We begin with the raw amino-acid sequence, 358 residues long: tRNA N6-adenosine threonylcarbamoyltransferase (358 aa).

2 residues coordinate Fe cation: His-118 and His-122. Substrate is bound by residues Ile-143–Gly-147, Asp-176, Gly-189, and Asn-298. Asp-326 is a binding site for Fe cation.

The protein belongs to the KAE1 / TsaD family. It depends on Fe(2+) as a cofactor.

It is found in the cytoplasm. It catalyses the reaction L-threonylcarbamoyladenylate + adenosine(37) in tRNA = N(6)-L-threonylcarbamoyladenosine(37) in tRNA + AMP + H(+). Functionally, required for the formation of a threonylcarbamoyl group on adenosine at position 37 (t(6)A37) in tRNAs that read codons beginning with adenine. Is involved in the transfer of the threonylcarbamoyl moiety of threonylcarbamoyl-AMP (TC-AMP) to the N6 group of A37, together with TsaE and TsaB. TsaD likely plays a direct catalytic role in this reaction. The polypeptide is tRNA N6-adenosine threonylcarbamoyltransferase (Rhodopirellula baltica (strain DSM 10527 / NCIMB 13988 / SH1)).